Here is a 682-residue protein sequence, read N- to C-terminus: Potassium-transporting ATPase ATP-binding subunit (682 aa).

Helical transmembrane passes span 34–54 (PVMF…LAMV), 58–78 (IAGS…TVLF), 219–239 (IALT…TATL), and 254–274 (VLVA…LSAI). Asp-307 acts as the 4-aspartylphosphate intermediate in catalysis. Residues Asp-344, Glu-348, 377–384 (FTAQSRMS), and Lys-395 each bind ATP. Positions 518 and 522 each coordinate Mg(2+). Transmembrane regions (helical) follow at residues 588–608 (FAII…LNVM), 616–636 (AILS…PLAL), and 662–682 (LVVP…LGLA).

It belongs to the cation transport ATPase (P-type) (TC 3.A.3) family. Type IA subfamily. The system is composed of three essential subunits: KdpA, KdpB and KdpC.

Its subcellular location is the cell inner membrane. It carries out the reaction K(+)(out) + ATP + H2O = K(+)(in) + ADP + phosphate + H(+). In terms of biological role, part of the high-affinity ATP-driven potassium transport (or Kdp) system, which catalyzes the hydrolysis of ATP coupled with the electrogenic transport of potassium into the cytoplasm. This subunit is responsible for energy coupling to the transport system and for the release of the potassium ions to the cytoplasm. This Salmonella choleraesuis (strain SC-B67) protein is Potassium-transporting ATPase ATP-binding subunit.